Here is a 307-residue protein sequence, read N- to C-terminus: D-alanine--D-alanine ligase (307 aa).

Residues 108–301 (KEVFAAAGLP…FPEFCAWMVE (194 aa)) form the ATP-grasp domain. 135–185 (LPPPYVVKPNCEGSSVGVYIVQADANGPPRLAPDMPRDLMVETYIPGRELT) provides a ligand contact to ATP. 3 residues coordinate Mg(2+): Asp-252, Glu-268, and Asn-270.

This sequence belongs to the D-alanine--D-alanine ligase family. It depends on Mg(2+) as a cofactor. The cofactor is Mn(2+).

The protein localises to the cytoplasm. It catalyses the reaction 2 D-alanine + ATP = D-alanyl-D-alanine + ADP + phosphate + H(+). Its pathway is cell wall biogenesis; peptidoglycan biosynthesis. Its function is as follows. Cell wall formation. The sequence is that of D-alanine--D-alanine ligase from Cereibacter sphaeroides (strain ATCC 17025 / ATH 2.4.3) (Rhodobacter sphaeroides).